The chain runs to 217 residues: Probable rhamnogalacturonan acetylesterase YesY (217 aa).

The active-site Nucleophile is the Ser-11. Residues Glu-178 and His-185 contribute to the active site.

It belongs to the 'GDSL' lipolytic enzyme family.

In terms of biological role, may play a role in the degradation of rhamnogalacturonan derived from plant cell walls. Probably has broad substrate specificity and may degrade several types of acetylated substrates. This Bacillus subtilis (strain 168) protein is Probable rhamnogalacturonan acetylesterase YesY (yesY).